The sequence spans 1088 residues: RNA-directed RNA polymerase (1088 aa).

The RdRp catalytic domain occupies 501 to 687 (LSYGDVTRFL…AKRYIAGGKI (187 aa)).

Belongs to the reoviridae RNA-directed RNA polymerase family. As to quaternary structure, interacts with VP3 (Potential). Interacts with VP2; this interaction activates VP1. Interacts with NSP5; this interaction is probably necessary for the formation of functional virus factories. Interacts with NSP2; this interaction is weak. Mg(2+) is required as a cofactor.

The protein localises to the virion. The enzyme catalyses RNA(n) + a ribonucleoside 5'-triphosphate = RNA(n+1) + diphosphate. In terms of biological role, RNA-directed RNA polymerase that is involved in both transcription and genome replication. Together with VP3 capping enzyme, forms an enzyme complex positioned near the channels situated at each of the five-fold vertices of the core. Following infection, the outermost layer of the virus is lost, leaving a double-layered particle (DLP) made up of the core and VP6 shell. VP1 then catalyzes the transcription of fully conservative plus-strand genomic RNAs that are extruded through the DLP's channels into the cytoplasm where they function as mRNAs for translation of viral proteins. One copy of each of the viral (+)RNAs is also recruited during core assembly, together with newly synthesized polymerase complexes and VP2. The polymerase of these novo-formed particles catalyzes the synthesis of complementary minus-strands leading to dsRNA formation. To do so, the polymerase specifically recognizes and binds 4 bases 5'-UGUG-3' in the conserved 3'-sequence of plus-strand RNA templates. VP2 presumably activates the autoinhibited VP1-RNA complex to coordinate packaging and genome replication. Once dsRNA synthesis is complete, the polymerase switches to the transcriptional mode, thus providing secondary transcription. This is RNA-directed RNA polymerase from Homo sapiens (Human).